We begin with the raw amino-acid sequence, 564 residues long: R-linalool synthase (564 aa).

Positions 320, 324, 464, 468, and 472 each coordinate Mg(2+). A DDXXD motif motif is present at residues Asp320 to Asp324.

It belongs to the terpene synthase family. It depends on Mg(2+) as a cofactor. The cofactor is Mn(2+).

The enzyme catalyses (2E)-geranyl diphosphate + H2O = (R)-linalool + diphosphate. In terms of biological role, specifically catalyzes production of (R)-(-)-linalool, the main component of lavender essential oil. The chain is R-linalool synthase from Lavandula angustifolia (Lavender).